A 192-amino-acid polypeptide reads, in one-letter code: MRAKPQSPLPRNPVPAWSPPTTTTDPMLEKDAAGGDFPANLVLQLMPLKTFPAAIRGVIQSELNYSVILQWVVTMDPEPVLSWTFSGVPCGMGEKLFIRRLSCEQLGTYMCIATNSKKQLVSEPVTISLPKPIMQPTEAEPMEPDPTLSLSGGSAIGLLAAGILGAGALIAGMCFIIIQSLRTDRQRIGICS.

Residues 1–26 (MRAKPQSPLPRNPVPAWSPPTTTTDP) form a disordered region. A compositionally biased stretch (pro residues) spans 7-18 (SPLPRNPVPAWS). Residues 20 to 128 (PTTTTDPMLE…QLVSEPVTIS (109 aa)) enclose the Ig-like domain. The N-linked (GlcNAc...) asparagine glycan is linked to Asn-64. Residues 158-178 (LLAAGILGAGALIAGMCFIII) form a helical membrane-spanning segment.

As to expression, expressed in bone and small intestine. Highly expressed in osteoclasts, and low expressed in osteoblasts and peripheral blood mononuclear cells (PBMCs).

The protein resides in the cell membrane. Functionally, may be involved in osteoclast differentiation. The polypeptide is Immunoglobulin superfamily member 23 (Homo sapiens (Human)).